We begin with the raw amino-acid sequence, 222 residues long: Cell division protein FtsQ (222 aa).

The Cytoplasmic portion of the chain corresponds to Met1–Val5. The chain crosses the membrane as a helical span at residues Ile6 to Phe26. Topologically, residues Val27–Arg222 are extracellular. The POTRA domain maps to Leu30 to Arg98.

It belongs to the FtsQ/DivIB family. FtsQ subfamily.

Its subcellular location is the cell membrane. Functionally, essential cell division protein. The polypeptide is Cell division protein FtsQ (Corynebacterium glutamicum (strain ATCC 13032 / DSM 20300 / JCM 1318 / BCRC 11384 / CCUG 27702 / LMG 3730 / NBRC 12168 / NCIMB 10025 / NRRL B-2784 / 534)).